A 507-amino-acid chain; its full sequence is ATP synthase subunit alpha (507 aa).

170 to 177 (GDRQTGKT) serves as a coordination point for ATP.

Belongs to the ATPase alpha/beta chains family. As to quaternary structure, F-type ATPases have 2 components, CF(1) - the catalytic core - and CF(0) - the membrane proton channel. CF(1) has five subunits: alpha(3), beta(3), gamma(1), delta(1), epsilon(1). CF(0) has three main subunits: a(1), b(2) and c(9-12). The alpha and beta chains form an alternating ring which encloses part of the gamma chain. CF(1) is attached to CF(0) by a central stalk formed by the gamma and epsilon chains, while a peripheral stalk is formed by the delta and b chains.

The protein resides in the cell inner membrane. It catalyses the reaction ATP + H2O + 4 H(+)(in) = ADP + phosphate + 5 H(+)(out). In terms of biological role, produces ATP from ADP in the presence of a proton gradient across the membrane. The alpha chain is a regulatory subunit. The chain is ATP synthase subunit alpha from Fervidobacterium nodosum (strain ATCC 35602 / DSM 5306 / Rt17-B1).